We begin with the raw amino-acid sequence, 510 residues long: ATP synthase subunit alpha (510 aa).

Residue 169-176 (GDRQTGKT) coordinates ATP.

Belongs to the ATPase alpha/beta chains family. As to quaternary structure, F-type ATPases have 2 components, CF(1) - the catalytic core - and CF(0) - the membrane proton channel. CF(1) has five subunits: alpha(3), beta(3), gamma(1), delta(1), epsilon(1). CF(0) has three main subunits: a(1), b(2) and c(9-12). The alpha and beta chains form an alternating ring which encloses part of the gamma chain. CF(1) is attached to CF(0) by a central stalk formed by the gamma and epsilon chains, while a peripheral stalk is formed by the delta and b chains.

It is found in the cell inner membrane. The catalysed reaction is ATP + H2O + 4 H(+)(in) = ADP + phosphate + 5 H(+)(out). Its function is as follows. Produces ATP from ADP in the presence of a proton gradient across the membrane. The alpha chain is a regulatory subunit. This is ATP synthase subunit alpha from Rickettsia felis (strain ATCC VR-1525 / URRWXCal2) (Rickettsia azadi).